The primary structure comprises 196 residues: Interleukin-18 (196 aa).

Residues 1-29 (MSCEEIAVCAVRLRENLCLYFEELECDAF) constitute a propeptide that is removed on maturation.

Belongs to the IL-1 family. Forms a ternary complex with ligand-binding receptor subunit IL18R1 and signaling receptor subunit IL18RAP at the plasma membrane. Mature IL18 first binds to IL18R1 forming a low affinity binary complex, which then interacts with IL18RAP to form a high affinity ternary complex that signals inside the cell. Interacts with cargo receptor TMED10; the interaction mediates the translocation from the cytoplasm into the ERGIC (endoplasmic reticulum-Golgi intermediate compartment) and thereby secretion. The pro-IL-18 precursor is processed by CASP1 or CASP4 to yield the active form.

It localises to the cytoplasm. It is found in the secreted. Augments natural killer cell activity in spleen cells and stimulates interferon gamma production in T-helper type I cells. Involved in transduction of inflammation downstream of pyroptosis: its mature form is specifically released in the extracellular milieu by passing through the gasdermin-D (GSDMD) pore. The polypeptide is Interleukin-18 (IL18) (Gallus gallus (Chicken)).